Consider the following 161-residue polypeptide: Regulator of ribonuclease activity A (161 aa).

The protein belongs to the RraA family. Homotrimer. Binds to both RNA-binding sites in the C-terminal region of Rne and to RhlB.

It is found in the cytoplasm. Its function is as follows. Globally modulates RNA abundance by binding to RNase E (Rne) and regulating its endonucleolytic activity. Can modulate Rne action in a substrate-dependent manner by altering the composition of the degradosome. Modulates RNA-binding and helicase activities of the degradosome. The chain is Regulator of ribonuclease activity A from Tolumonas auensis (strain DSM 9187 / NBRC 110442 / TA 4).